We begin with the raw amino-acid sequence, 583 residues long: Proteasome-associated ATPase (583 aa).

Positions 1–19 (METPNQDSGRTPTEQSAAN) are enriched in polar residues. A disordered region spans residues 1–22 (METPNQDSGRTPTEQSAANDLS). A coiled-coil region spans residues 24–75 (ADRQVNILRDKLRHIDRQLAAATQNNTKLVSMLETAKAEILRLKNALDQEGQ). ATP is bound at residue 271–276 (GCGKTL). Residues 582–583 (YL) are docks into pockets in the proteasome alpha-ring.

The protein belongs to the AAA ATPase family. As to quaternary structure, homohexamer. Assembles into a hexameric ring structure that caps the 20S proteasome core. Strongly interacts with the prokaryotic ubiquitin-like protein Pup through a hydrophobic interface; the interacting region of ARC lies in its N-terminal coiled-coil domain. There is one Pup binding site per ARC hexamer ring. Upon ATP-binding, the C-terminus of ARC interacts with the alpha-rings of the proteasome core, possibly by binding to the intersubunit pockets.

It functions in the pathway protein degradation; proteasomal Pup-dependent pathway. ATPase which is responsible for recognizing, binding, unfolding and translocation of pupylated proteins into the bacterial 20S proteasome core particle. May be essential for opening the gate of the 20S proteasome via an interaction with its C-terminus, thereby allowing substrate entry and access to the site of proteolysis. Thus, the C-termini of the proteasomal ATPase may function like a 'key in a lock' to induce gate opening and therefore regulate proteolysis. The protein is Proteasome-associated ATPase of Pseudarthrobacter chlorophenolicus (strain ATCC 700700 / DSM 12829 / CIP 107037 / JCM 12360 / KCTC 9906 / NCIMB 13794 / A6) (Arthrobacter chlorophenolicus).